The primary structure comprises 191 residues: GDP-mannose pyrophosphatase (191 aa).

GDP-alpha-D-mannose is bound by residues tyrosine 17, 38-40 (KRE), arginine 67, and 85-87 (AGL). The Nudix hydrolase domain occupies 43 to 180 (DRGNGATILL…EIRDGKTVLL (138 aa)). Mg(2+)-binding residues include alanine 85, glutamate 100, and glutamate 104. Residues 86-106 (GLLDNDEPEVCIRKEAIEETG) carry the Nudix box motif. Residues glutamate 104, glutamate 127, 150–151 (DE), and lysine 176 contribute to the GDP-alpha-D-mannose site. A Mg(2+)-binding site is contributed by glutamate 151.

It belongs to the Nudix hydrolase family. NudK subfamily. Homodimer. Requires Mg(2+) as cofactor.

The enzyme catalyses GDP-alpha-D-mannose + H2O = alpha-D-mannose 1-phosphate + GMP + 2 H(+). Functionally, nucleoside diphosphate sugar hydrolase that hydrolyzes GDP-mannose as its preferred substrate, yielding GMP and mannose-1-phosphate. In Shigella boydii serotype 4 (strain Sb227), this protein is GDP-mannose pyrophosphatase (nudK).